The primary structure comprises 410 residues: Proteasome-activating nucleotidase (410 aa).

A coiled-coil region spans residues 1–70 (MENNSQNVLK…LRGEIERFRT (70 aa)). ATP is bound by residues 195 to 200 (GTGKTL) and His334. The segment at 408–410 (MFG) is docks into pockets in the proteasome alpha-ring to cause gate opening.

It belongs to the AAA ATPase family. Homohexamer. The hexameric complex has a two-ring architecture resembling a top hat that caps the 20S proteasome core at one or both ends. Upon ATP-binding, the C-terminus of PAN interacts with the alpha-rings of the proteasome core by binding to the intersubunit pockets.

The protein localises to the cytoplasm. Its function is as follows. ATPase which is responsible for recognizing, binding, unfolding and translocation of substrate proteins into the archaeal 20S proteasome core particle. Is essential for opening the gate of the 20S proteasome via an interaction with its C-terminus, thereby allowing substrate entry and access to the site of proteolysis. Thus, the C-termini of the proteasomal ATPase function like a 'key in a lock' to induce gate opening and therefore regulate proteolysis. Unfolding activity requires energy from ATP hydrolysis, whereas ATP binding alone promotes ATPase-20S proteasome association which triggers gate opening, and supports translocation of unfolded substrates. The sequence is that of Proteasome-activating nucleotidase from Methanothermobacter thermautotrophicus (strain ATCC 29096 / DSM 1053 / JCM 10044 / NBRC 100330 / Delta H) (Methanobacterium thermoautotrophicum).